Reading from the N-terminus, the 767-residue chain is Syn-copalyl diphosphate synthase, chloroplastic (767 aa).

Residues 1 to 47 (MPVFTASFQCVTLFGQPASAADAQPLLQGQRPFLHLHARRRRPCGPM) constitute a chloroplast transit peptide. Residues 45 to 74 (GPMLISKSPPYPASEETREWEADGQHEHTD) form a disordered region. Positions 59–74 (EETREWEADGQHEHTD) are enriched in basic and acidic residues. Substrate is bound at residue K233. Positions 365 and 367 each coordinate Mg(2+). The short motif at 365 to 368 (DIDD) is the DXDD motif element. K453 contributes to the substrate binding site.

The protein belongs to the terpene synthase family. Mg(2+) is required as a cofactor.

It localises to the plastid. It is found in the chloroplast. The enzyme catalyses (2E,6E,10E)-geranylgeranyl diphosphate = 9alpha-copalyl diphosphate. Functionally, catalyzes the conversion of geranylgeranyl diphosphate to the phytoalexin precursor syn-copalyl diphosphate. Required for the biosynthesis of momilactones that exude from roots and act as allelochemicals against lowland weeds in paddy soil. This chain is Syn-copalyl diphosphate synthase, chloroplastic, found in Oryza sativa subsp. japonica (Rice).